A 454-amino-acid polypeptide reads, in one-letter code: uncharacterized protein (454 aa).

[4Fe-4S] cluster contacts are provided by C73, C79, C82, and C154. S-adenosyl-L-methionine-binding residues include Q279, F307, D328, and D381. Residue C408 is the Nucleophile of the active site.

This sequence belongs to the class I-like SAM-binding methyltransferase superfamily. RNA M5U methyltransferase family.

This is an uncharacterized protein from Leptospira interrogans serogroup Icterohaemorrhagiae serovar Lai (strain 56601).